Consider the following 220-residue polypeptide: Mediator of RNA polymerase II transcription subunit 19 (220 aa).

The tract at residues 171–220 (AFDLDGTGKSQSGSNSGNNSKKRKNKSSGSSMATPTHSDSHEDMKRRRLE) is disordered. The segment covering 178–189 (GKSQSGSNSGNN) has biased composition (low complexity). Residues 208 to 220 (SDSHEDMKRRRLE) show a composition bias toward basic and acidic residues.

This sequence belongs to the Mediator complex subunit 19 family. In terms of assembly, component of the Mediator complex, which is composed of at least 21 subunits that form three structurally distinct submodules. The Mediator head module contains MED6, MED8, MED11, SRB4/MED17, SRB5/MED18, ROX3/MED19, SRB2/MED20 and SRB6/MED22, the middle module contains MED1, MED4, NUT1/MED5, MED7, CSE2/MED9, NUT2/MED10, SRB7/MED21 and SOH1/MED31, and the tail module contains MED2, PGD1/MED3, RGR1/MED14, GAL11/MED15 and SIN4/MED16. The head and the middle modules interact directly with RNA polymerase II, whereas the elongated tail module interacts with gene-specific regulatory proteins.

The protein resides in the nucleus. Component of the Mediator complex, a coactivator involved in the regulated transcription of nearly all RNA polymerase II-dependent genes. Mediator functions as a bridge to convey information from gene-specific regulatory proteins to the basal RNA polymerase II transcription machinery. The Mediator complex, having a compact conformation in its free form, is recruited to promoters by direct interactions with regulatory proteins and serves for the assembly of a functional preinitiation complex with RNA polymerase II and the general transcription factors. The Mediator complex unfolds to an extended conformation and partially surrounds RNA polymerase II, specifically interacting with the unphosphorylated form of the C-terminal domain (CTD) of RNA polymerase II. The Mediator complex dissociates from the RNA polymerase II holoenzyme and stays at the promoter when transcriptional elongation begins. The chain is Mediator of RNA polymerase II transcription subunit 19 (ROX3) from Saccharomyces cerevisiae (strain ATCC 204508 / S288c) (Baker's yeast).